Reading from the N-terminus, the 311-residue chain is Acetaldehyde dehydrogenase 2 (311 aa).

11–14 (SGNI) is an NAD(+) binding site. Cysteine 131 functions as the Acyl-thioester intermediate in the catalytic mechanism. NAD(+) is bound by residues 162–170 (SAGPGTRAN) and asparagine 289.

This sequence belongs to the acetaldehyde dehydrogenase family.

It catalyses the reaction acetaldehyde + NAD(+) + CoA = acetyl-CoA + NADH + H(+). In Azotobacter vinelandii (strain DJ / ATCC BAA-1303), this protein is Acetaldehyde dehydrogenase 2 (mhpF).